The sequence spans 964 residues: MVDIIDKALRMGEGHQLKKLENVAKAVNALEDEISALSDEDLKAQTPKFKQEIENGKSLDEIMPEAFATVREVSKRTLGQRHFDVQLMGGAALHWGNIAEMKTGEGKTLVATLPTYLNALEGRGVHVVTVNDYLASYQSELMGRIYRFLGMNVGCIITEQKPPERRKQYNADITYGTNNEFGFDYLRDNMAWEKADLVQRGHHYAIVDEVDSILIDEARTPLIISGPAEGDVTRWYRQFAKLVLKLTRDEDYDVDEKKKVVGILDPGITKVEDFLGIDNLYEPANTALIGYLNNAIKAKELFLRDKDYVVTQGEVLIVDEHTGRILPGRRYNEGLHQAIEAKEGVEVKAENQTFATITLQNYFRMYDKLAGMTGTAETEAAEFMNTYKLGVLPIKTNKPMIRKDQDDLIYRTKKEKLAAIVKDVAKRHAKGQPVLLGTASVESSEVVSTLLDVAKIPHQVLNAKQHEKEAAVVAVAGRKGAVTVATNMAGRGTDIMLGGNVEFLADAKLKSEGYSPEDTPEEYEKRWPGTLNEIKAQVKDEHEEVKELGGLYVLGTERHESRRIDNQLRGRSGRQGDPGESRFYLSLEDDLMRLFNTQLVAQVMAKGMEEGQPIEAKSVTKGVRTAQKAVESRNYEIRKNVLKYDDVMNKQRTVIYSERQAVLKGEDIHKDILRFISDTVESYIKGANKGSEKPKDWDWEGLFKALNTVIPTKVDEDEVRKIVGGLKGAKAVEAVRDLIVEDARQQYGEMEETIGETGLRDLERRVVLAVLDRKWREHLYEMDYLKDGIGLRGMGQRDPLVEYQREGYQMYNSMIEAIKEETVQLLFHIDIKQVATTDEAVDEVEETAESADTIAVASGPDENGESVVEAAEGEVEEEDEDTDAKQAIAESAAASGAGESTLPVAGPAPISHAEGKVPVSKRPKSEELKTPWADGRTFPGTGKNAPCPCGSGRKYKMCHGQNEK.

Residues Gln86, 104-108 (GEGKT), and Asp494 contribute to the ATP site. Positions 848–964 (AESADTIAVA…YKMCHGQNEK (117 aa)) are disordered. Over residues 871 to 882 (AEGEVEEEDEDT) the composition is skewed to acidic residues. Over residues 889–900 (AESAAASGAGES) the composition is skewed to low complexity. Positions 947, 949, 958, and 959 each coordinate Zn(2+).

Belongs to the SecA family. Monomer and homodimer. Part of the essential Sec protein translocation apparatus which comprises SecA, SecYEG and auxiliary proteins SecDF. Other proteins may also be involved. Zn(2+) serves as cofactor.

It localises to the cell membrane. The protein resides in the cytoplasm. It catalyses the reaction ATP + H2O + cellular proteinSide 1 = ADP + phosphate + cellular proteinSide 2.. Its function is as follows. Part of the Sec protein translocase complex. Interacts with the SecYEG preprotein conducting channel. Has a central role in coupling the hydrolysis of ATP to the transfer of proteins into and across the cell membrane, serving as an ATP-driven molecular motor driving the stepwise translocation of polypeptide chains across the membrane. The chain is Protein translocase subunit SecA from Bifidobacterium longum (strain NCC 2705).